The chain runs to 358 residues: Psilocybin cluster transcription regulator (358 aa).

2 disordered regions span residues 1–40 (MAPA…IAGM) and 62–212 (SGGK…RRRR). A compositionally biased stretch (pro residues) spans 18 to 29 (PPAPGAPAPANA). The span at 79 to 91 (QTLSNLAQAQPYG) shows a compositional bias: polar residues. Positions 179–190 (PTTGRRGGRSAT) are enriched in low complexity. The span at 195 to 209 (EWSRQRKDNHKEVER) shows a compositional bias: basic and acidic residues. A basic motif region spans residues 199 to 212 (QRKDNHKEVERRRR). Residues 199–249 (QRKDNHKEVERRRRGNINEGINELGRIVPSGSGEKAKGAILSRAVQYIHHL) enclose the bHLH domain. Positions 213–249 (GNINEGINELGRIVPSGSGEKAKGAILSRAVQYIHHL) are helix-loop-helix motif. Residues 264–306 (KLLMDQAMGDLQAQLEEVKRLWEEERMARTRLEAELEVLRNMN) are a coiled coil. Residues 308–358 (VNAGSAPASKDESAAGTKRRSTDGAEAATAATESSTANAEGERDGKRQRTE) form a disordered region. Residues 331–346 (GAEAATAATESSTANA) are compositionally biased toward low complexity. Over residues 347-358 (EGERDGKRQRTE) the composition is skewed to basic and acidic residues.

It localises to the nucleus. In terms of biological role, transcription factor that may regulate the expression of the gene cluster that mediates the biosynthesis of psilocybin, a psychotropic tryptamine-derived natural product. The protein is Psilocybin cluster transcription regulator of Psilocybe cubensis (Psychedelic mushroom).